We begin with the raw amino-acid sequence, 166 residues long: UPF0561 protein C2orf68 homolog (166 aa).

Basic and acidic residues predominate over residues 36–49 (RDDYDKKVKQAAKE). A disordered region spans residues 36–108 (RDDYDKKVKQ…EPEPPGHQLF (73 aa)).

It belongs to the UPF0561 family.

This Bos taurus (Bovine) protein is UPF0561 protein C2orf68 homolog.